A 418-amino-acid chain; its full sequence is Gamma-glutamyl phosphate reductase (418 aa).

It belongs to the gamma-glutamyl phosphate reductase family.

Its subcellular location is the cytoplasm. It catalyses the reaction L-glutamate 5-semialdehyde + phosphate + NADP(+) = L-glutamyl 5-phosphate + NADPH + H(+). The protein operates within amino-acid biosynthesis; L-proline biosynthesis; L-glutamate 5-semialdehyde from L-glutamate: step 2/2. Its function is as follows. Catalyzes the NADPH-dependent reduction of L-glutamate 5-phosphate into L-glutamate 5-semialdehyde and phosphate. The product spontaneously undergoes cyclization to form 1-pyrroline-5-carboxylate. The sequence is that of Gamma-glutamyl phosphate reductase from Geotalea uraniireducens (strain Rf4) (Geobacter uraniireducens).